We begin with the raw amino-acid sequence, 66 residues long: MDWLAKYWWILVLVFLVGVLLNVIKDLKRIDHKKFLANKPELPPHRDFNDKWDDEEDWPKKDQPKK.

Residues 4-24 traverse the membrane as a helical segment; that stretch reads LAKYWWILVLVFLVGVLLNVI. A disordered region spans residues 39-66; the sequence is KPELPPHRDFNDKWDDEEDWPKKDQPKK. Positions 42-51 are enriched in basic and acidic residues; sequence LPPHRDFNDK.

This sequence belongs to the UPF0370 family.

It is found in the cell membrane. This is UPF0370 protein YpfN from Salmonella paratyphi A (strain AKU_12601).